Here is a 948-residue protein sequence, read N- to C-terminus: Bifunctional uridylyltransferase/uridylyl-removing enzyme (948 aa).

Residues 1–372 form a uridylyltransferase region; the sequence is METHHIDFST…RFANRSRKIP (372 aa). Residues 373–728 form a uridylyl-removing region; sequence GTVEFVEDRG…VRTDSFHAIT (356 aa). The HD domain maps to 489-605; the sequence is VDEHLIRAVE…IDFADRVQSL (117 aa). ACT domains follow at residues 729–810 and 840–921; these read EITV…EVIA and VIEV…ERMP.

The protein belongs to the GlnD family. The cofactor is Mg(2+).

It carries out the reaction [protein-PII]-L-tyrosine + UTP = [protein-PII]-uridylyl-L-tyrosine + diphosphate. The enzyme catalyses [protein-PII]-uridylyl-L-tyrosine + H2O = [protein-PII]-L-tyrosine + UMP + H(+). Its activity is regulated as follows. Uridylyltransferase (UTase) activity is inhibited by glutamine, while glutamine activates uridylyl-removing (UR) activity. In terms of biological role, modifies, by uridylylation and deuridylylation, the PII regulatory proteins (GlnB and homologs), in response to the nitrogen status of the cell that GlnD senses through the glutamine level. Under low glutamine levels, catalyzes the conversion of the PII proteins and UTP to PII-UMP and PPi, while under higher glutamine levels, GlnD hydrolyzes PII-UMP to PII and UMP (deuridylylation). Thus, controls uridylylation state and activity of the PII proteins, and plays an important role in the regulation of nitrogen fixation and metabolism. In Rhizobium tropici, this protein is Bifunctional uridylyltransferase/uridylyl-removing enzyme.